The following is a 139-amino-acid chain: Desampylase (139 aa).

The region spanning 6 to 139 (LSLAADARDS…EFRELSVAVE (134 aa)) is the MPN domain. The active-site Proton donor/acceptor is glutamate 31. Residues histidine 88, histidine 90, and aspartate 101 each coordinate Zn(2+). Positions 88–101 (HSHPESDPVPSATD) match the JAMM motif motif.

This sequence belongs to the peptidase M67B family. Monomer. Zn(2+) serves as cofactor.

The catalysed reaction is an N(6)-[small archaeal modifier protein]-[protein]-L-lysine + H2O = a [protein]-L-lysine + a [small archaeal modifier protein].. With respect to regulation, inhibited by EDTA and N-ethylmaleimide (NEM) in vitro. Functionally, metalloprotease that displays desampylase (DSAMP) activity, cleaving ubiquitin-like small archaeal modifier proteins (SAMP1, SAMP2 and SAMP3) from protein conjugates (isopeptide- and linear-linked). Thus, likely regulates sampylation and the pools of 'free' SAMP available for protein modification. Functions as a specific and not a general protease since it is unable to hydrolyze a variety of unmodified proteins otherwise hydrolyzed by proteinase K. This is Desampylase from Haloferax volcanii (strain ATCC 29605 / DSM 3757 / JCM 8879 / NBRC 14742 / NCIMB 2012 / VKM B-1768 / DS2) (Halobacterium volcanii).